Reading from the N-terminus, the 872-residue chain is Eukaryotic translation initiation factor 3 subunit C (872 aa).

The disordered stretch occupies residues 1–100; it reads MSRFFRGGDD…KVKSAKDKRF (100 aa). Composition is skewed to acidic residues over residues 16 to 59 and 72 to 87; these read SSEE…DEEE and SDDE…SDDE. The segment covering 88-100 has biased composition (basic and acidic residues); it reads ATTKVKSAKDKRF. Residues 613–787 enclose the PCI domain; it reads FHMHINLELL…ETVIFRKGVE (175 aa). Residues 812–872 are disordered; it reads TLEQKTQGSA…GGALGNAVRG (61 aa). The span at 831 to 848 shows a compositional bias: gly residues; that stretch reads GGGQRGGGQRGGRGGART.

This sequence belongs to the eIF-3 subunit C family. Component of the eukaryotic translation initiation factor 3 (eIF-3) complex.

Its subcellular location is the cytoplasm. Component of the eukaryotic translation initiation factor 3 (eIF-3) complex, which is involved in protein synthesis of a specialized repertoire of mRNAs and, together with other initiation factors, stimulates binding of mRNA and methionyl-tRNAi to the 40S ribosome. The eIF-3 complex specifically targets and initiates translation of a subset of mRNAs involved in cell proliferation. The sequence is that of Eukaryotic translation initiation factor 3 subunit C (nip-1) from Neurospora crassa (strain ATCC 24698 / 74-OR23-1A / CBS 708.71 / DSM 1257 / FGSC 987).